We begin with the raw amino-acid sequence, 1706 residues long: Histone acetyltransferase HAC12 (1706 aa).

Disordered regions lie at residues 1–33 (MNVQAHMSGQRSGQVPNQGTVPQNNGNSQMQNL), 251–284 (TNNNSGGFSAEPTIVPQSQQQQQRQHTGGQNSHM), 397–456 (VSRV…LGKT), and 524–543 (QNSQQIQQMMHPQNIGSDSS). Residues 397-406 (VSRVNSSLSH) show a composition bias toward polar residues. Residues 407-434 (QQQFQQPPNRFQQQPNQIQQQQQQFLNQ) show a composition bias toward low complexity. The segment at 637–716 (HDPKFKNQQR…DPRCPVCVPV (80 aa)) adopts a TAZ-type 1 zinc-finger fold. Residues 791-909 (TESCKSSIVS…PELTSKSRKP (119 aa)) are disordered. Residues 794-805 (CKSSIVSTTEAD) are compositionally biased toward polar residues. Composition is skewed to basic and acidic residues over residues 809-829 (DAERKDHRPLKSETMEVKVEI) and 870-896 (PKQENIKMKKEPGWPKKEPGCPKKEEL). Residues 998–1075 (HYFCIPCYNE…EYTCPYCYVI (78 aa)) form a PHD-type zinc finger. Positions 1090–1526 (VLGAKDLPRT…VLYHLHNPTA (437 aa)) constitute a CBP/p300-type HAT domain. Residues 1213–1215 (LDS), 1232–1233 (RT), and tryptophan 1288 contribute to the acetyl-CoA site. 2 ZZ-type zinc fingers span residues 1408–1471 (HLQH…IADI) and 1528–1581 (AFVT…SLAD). Residues cysteine 1413, cysteine 1416, cysteine 1428, cysteine 1431, cysteine 1437, cysteine 1440, histidine 1453, histidine 1461, cysteine 1533, cysteine 1536, cysteine 1548, cysteine 1551, cysteine 1557, cysteine 1560, histidine 1569, and histidine 1571 each contribute to the Zn(2+) site. The TAZ-type 2 zinc finger occupies 1588–1671 (EARQLRVLQL…ECDVPRCGDL (84 aa)).

The protein resides in the nucleus. It carries out the reaction L-lysyl-[protein] + acetyl-CoA = N(6)-acetyl-L-lysyl-[protein] + CoA + H(+). Functionally, acetyltransferase enzyme. Acetylates histones, giving a specific tag for transcriptional activation. The chain is Histone acetyltransferase HAC12 (HAC12) from Arabidopsis thaliana (Mouse-ear cress).